The following is a 914-amino-acid chain: TRPM8 channel-associated factor 3 (914 aa).

The region spanning 533–832 (NSWVSTGLYL…TYLQLQEGFG (300 aa)) is the Peptidase M60 domain.

It belongs to the TCAF family. Prostate-specific. Present in both dorso-lateral and anterior prostate.

Its function is as follows. May play a role in the regulation of the cation channel TRPM8 activity. The polypeptide is TRPM8 channel-associated factor 3 (Mus musculus (Mouse)).